The chain runs to 605 residues: Elongation factor 4 (605 aa).

The 184-residue stretch at 9–192 (NRIRNFCIIA…AIVQRIPAPA (184 aa)) folds into the tr-type G domain. GTP contacts are provided by residues 21 to 26 (DHGKST) and 139 to 142 (NKID).

It belongs to the TRAFAC class translation factor GTPase superfamily. Classic translation factor GTPase family. LepA subfamily.

The protein localises to the cell inner membrane. It carries out the reaction GTP + H2O = GDP + phosphate + H(+). Functionally, required for accurate and efficient protein synthesis under certain stress conditions. May act as a fidelity factor of the translation reaction, by catalyzing a one-codon backward translocation of tRNAs on improperly translocated ribosomes. Back-translocation proceeds from a post-translocation (POST) complex to a pre-translocation (PRE) complex, thus giving elongation factor G a second chance to translocate the tRNAs correctly. Binds to ribosomes in a GTP-dependent manner. This chain is Elongation factor 4, found in Pelodictyon phaeoclathratiforme (strain DSM 5477 / BU-1).